The primary structure comprises 96 residues: Co-chaperonin GroES (96 aa).

Belongs to the GroES chaperonin family. Heptamer of 7 subunits arranged in a ring. Interacts with the chaperonin GroEL.

It is found in the cytoplasm. Functionally, together with the chaperonin GroEL, plays an essential role in assisting protein folding. The GroEL-GroES system forms a nano-cage that allows encapsulation of the non-native substrate proteins and provides a physical environment optimized to promote and accelerate protein folding. GroES binds to the apical surface of the GroEL ring, thereby capping the opening of the GroEL channel. This Alcanivorax borkumensis (strain ATCC 700651 / DSM 11573 / NCIMB 13689 / SK2) protein is Co-chaperonin GroES.